The chain runs to 305 residues: PI-PLC X domain-containing protein 1 (305 aa).

Residues 1–24 (MSMSTLRHFLWLGALLLATIQVSA) form the signal peptide. One can recognise a PI-PLC X-box domain in the interval 25-189 (LPTAQDLICN…RLIVFVDSKA (165 aa)). Residues H53 and H97 contribute to the active site. Residue N237 is glycosylated (N-linked (GlcNAc...) asparagine).

It is found in the secreted. The polypeptide is PI-PLC X domain-containing protein 1 (Arthroderma benhamiae (strain ATCC MYA-4681 / CBS 112371) (Trichophyton mentagrophytes)).